A 301-amino-acid polypeptide reads, in one-letter code: GTP cyclohydrolase FolE2 (301 aa).

The protein belongs to the GTP cyclohydrolase IV family.

It catalyses the reaction GTP + H2O = 7,8-dihydroneopterin 3'-triphosphate + formate + H(+). Its pathway is cofactor biosynthesis; 7,8-dihydroneopterin triphosphate biosynthesis; 7,8-dihydroneopterin triphosphate from GTP: step 1/1. Its function is as follows. Converts GTP to 7,8-dihydroneopterin triphosphate. In Exiguobacterium sibiricum (strain DSM 17290 / CCUG 55495 / CIP 109462 / JCM 13490 / 255-15), this protein is GTP cyclohydrolase FolE2.